The chain runs to 401 residues: MGEEATAVAAAGVRPELVREAEVSLLECKVCFERFGHWQQRRPRNLPCGHVVCLACVAALAHPRTLGLECPFCRRACRACDTSDCLPVLHLLELLGSTLHASPAALSAAPFAPGTLTCYHAFGGWGTLVNPTGLALCPKTGRVVVVHDGKRRVKIFDSGGGGAHQFGEKGDAAHDVKYPLDVAVTNDCHVVVTDAGDCSLKVFDFFGQIKLVVGKQFSLPWGVEITPHNGVLVTDAEAGTLHLLEADFPEGVLRRIERLQAHLCSPRGLAVSWLTGAIAVLEHPCAFGRTGCNNTRVKVFNSTMQLIGQVDSFGLNLLFPSKVTASAVTFDHQGNVIVADTSGPAIVCLGKPEEFPALKPIITHGLSRPVALAFTKENSLLVLDTASHSIKVFKVMEGNGG.

An RING-type zinc finger spans residues 28–74; that stretch reads CKVCFERFGHWQQRRPRNLPCGHVVCLACVAALAHPRTLGLECPFCR. NHL repeat units follow at residues 115–159, 163–206, 207–247, 250–303, 304–352, and 353–396; these read TLTC…FDSG, AHQF…FDFF, GQIK…LEAD, EGVL…FNST, MQLI…LGKP, and EEFP…FKVM.

In terms of assembly, interacts with AGL. Interacts (via the NHL repeats) with EPM2A/laforin. Forms a complex with EPM2A/laforin and HSP70. Interacts with PRDM8.

It localises to the endoplasmic reticulum. The protein localises to the nucleus. The enzyme catalyses S-ubiquitinyl-[E2 ubiquitin-conjugating enzyme]-L-cysteine + [acceptor protein]-L-lysine = [E2 ubiquitin-conjugating enzyme]-L-cysteine + N(6)-ubiquitinyl-[acceptor protein]-L-lysine.. The protein operates within protein modification; protein ubiquitination. Functionally, E3 ubiquitin-protein ligase. Together with the phosphatase EPM2A/laforin, appears to be involved in the clearance of toxic polyglucosan and protein aggregates via multiple pathways. In complex with EPM2A/laforin and HSP70, suppresses the cellular toxicity of misfolded proteins by promoting their degradation through the ubiquitin-proteasome system (UPS). Ubiquitinates the glycogen-targeting protein phosphatase subunits PPP1R3C/PTG and PPP1R3D in a laforin-dependent manner and targets them for proteasome-dependent degradation, thus decreasing glycogen accumulation. Polyubiquitinates EPM2A/laforin and ubiquitinates AGL and targets them for proteasome-dependent degradation. Also promotes proteasome-independent protein degradation through the macroautophagy pathway. This chain is E3 ubiquitin-protein ligase NHLRC1 (Nhlrc1), found in Mus musculus (Mouse).